A 340-amino-acid polypeptide reads, in one-letter code: Fructose-1,6-bisphosphatase class 1 (340 aa).

Mg(2+)-binding residues include Glu-107, Asp-126, Leu-128, and Asp-129. Substrate is bound at residue Asn-215. Glu-287 is a Mg(2+) binding site.

It belongs to the FBPase class 1 family. Homotetramer. Mg(2+) is required as a cofactor.

It localises to the cytoplasm. The enzyme catalyses beta-D-fructose 1,6-bisphosphate + H2O = beta-D-fructose 6-phosphate + phosphate. The protein operates within carbohydrate biosynthesis; gluconeogenesis. The sequence is that of Fructose-1,6-bisphosphatase class 1 from Brucella suis biovar 1 (strain 1330).